Reading from the N-terminus, the 78-residue chain is UPF0248 protein Msed_0897 (78 aa).

The protein belongs to the UPF0248 family.

This is UPF0248 protein Msed_0897 from Metallosphaera sedula (strain ATCC 51363 / DSM 5348 / JCM 9185 / NBRC 15509 / TH2).